Consider the following 226-residue polypeptide: Phosphoribosylformylglycinamidine synthase subunit PurQ (226 aa).

Positions phenylalanine 3–tyrosine 225 constitute a Glutamine amidotransferase type-1 domain. The Nucleophile role is filled by cysteine 86. Active-site residues include histidine 194 and glutamate 196.

Part of the FGAM synthase complex composed of 1 PurL, 1 PurQ and 2 PurS subunits.

The protein localises to the cytoplasm. The enzyme catalyses N(2)-formyl-N(1)-(5-phospho-beta-D-ribosyl)glycinamide + L-glutamine + ATP + H2O = 2-formamido-N(1)-(5-O-phospho-beta-D-ribosyl)acetamidine + L-glutamate + ADP + phosphate + H(+). The catalysed reaction is L-glutamine + H2O = L-glutamate + NH4(+). It functions in the pathway purine metabolism; IMP biosynthesis via de novo pathway; 5-amino-1-(5-phospho-D-ribosyl)imidazole from N(2)-formyl-N(1)-(5-phospho-D-ribosyl)glycinamide: step 1/2. Functionally, part of the phosphoribosylformylglycinamidine synthase complex involved in the purines biosynthetic pathway. Catalyzes the ATP-dependent conversion of formylglycinamide ribonucleotide (FGAR) and glutamine to yield formylglycinamidine ribonucleotide (FGAM) and glutamate. The FGAM synthase complex is composed of three subunits. PurQ produces an ammonia molecule by converting glutamine to glutamate. PurL transfers the ammonia molecule to FGAR to form FGAM in an ATP-dependent manner. PurS interacts with PurQ and PurL and is thought to assist in the transfer of the ammonia molecule from PurQ to PurL. This Exiguobacterium sp. (strain ATCC BAA-1283 / AT1b) protein is Phosphoribosylformylglycinamidine synthase subunit PurQ.